The following is a 436-amino-acid chain: Methylenetetrahydrofolate--tRNA-(uracil-5-)-methyltransferase TrmFO (436 aa).

Position 8–13 (8–13) interacts with FAD; sequence GAGLAG.

Belongs to the MnmG family. TrmFO subfamily. The cofactor is FAD.

It localises to the cytoplasm. It carries out the reaction uridine(54) in tRNA + (6R)-5,10-methylene-5,6,7,8-tetrahydrofolate + NADH + H(+) = 5-methyluridine(54) in tRNA + (6S)-5,6,7,8-tetrahydrofolate + NAD(+). It catalyses the reaction uridine(54) in tRNA + (6R)-5,10-methylene-5,6,7,8-tetrahydrofolate + NADPH + H(+) = 5-methyluridine(54) in tRNA + (6S)-5,6,7,8-tetrahydrofolate + NADP(+). Catalyzes the folate-dependent formation of 5-methyl-uridine at position 54 (M-5-U54) in all tRNAs. The polypeptide is Methylenetetrahydrofolate--tRNA-(uracil-5-)-methyltransferase TrmFO (Persephonella marina (strain DSM 14350 / EX-H1)).